A 395-amino-acid chain; its full sequence is Carbohydrate sulfotransferase 6 (395 aa).

Residues 1 to 5 (MWLPR) lie on the Cytoplasmic side of the membrane. The helical; Signal-anchor for type II membrane protein transmembrane segment at 6 to 26 (VSSTAVTALLLAQTFLLLFLV) threads the bilayer. Topologically, residues 27 to 395 (SRPGPSSPAG…ASSTASHPRN (369 aa)) are lumenal. 49–55 (WRSGSSF) is a binding site for 3'-phosphoadenylyl sulfate. Asparagine 116 is a glycosylation site (N-linked (GlcNAc...) asparagine). Position 202–210 (202–210 (RDPRAVLRS)) interacts with 3'-phosphoadenylyl sulfate. N-linked (GlcNAc...) asparagine glycans are attached at residues asparagine 229, asparagine 305, and asparagine 328.

Belongs to the sulfotransferase 1 family. Gal/GlcNAc/GalNAc subfamily. In terms of tissue distribution, expressed in cornea. Mainly expressed in brain. Also expressed in spinal cord and trachea.

It is found in the golgi apparatus membrane. It carries out the reaction 3'-phosphoadenylyl sulfate + keratan = adenosine 3',5'-bisphosphate + keratan 6'-sulfate.. In terms of biological role, sulfotransferase that utilizes 3'-phospho-5'-adenylyl sulfate (PAPS) as sulfonate donor to catalyze the transfer of sulfate to position 6 of non-reducing N-acetylglucosamine (GlcNAc) residues of keratan. Cooperates with B4GALT4 galactosyltransferase and B3GNT7 N-acetylglucosaminyltransferase to construct and elongate the sulfated disaccharide unit [-&gt;3Galbeta1-&gt;4(6-sulfoGlcNAcbeta)1-&gt;] within keratan sulfate polymer. Involved in biosynthesis of keratan sulfate in cornea, with an impact on proteoglycan fibril organization and corneal transparency. Involved in sulfation of endothelial mucins such as GLYCAM1. The protein is Carbohydrate sulfotransferase 6 of Homo sapiens (Human).